We begin with the raw amino-acid sequence, 326 residues long: uncharacterized protein (326 aa).

Solcar repeat units follow at residues 20–107, 120–219, and 231–322; these read QDSN…CKKK, LTNT…LREF, and KSNL…VCDS. 6 helical membrane passes run 24–40, 84–104, 126–143, 195–213, 237–254, and 297–316; these read IAFL…RTVV, GLNC…YEAC, LFSG…TYPL, VWPT…FAVY, LTIG…TYPF, and GLAA…WLVY.

The protein belongs to the mitochondrial carrier (TC 2.A.29) family.

Its subcellular location is the mitochondrion inner membrane. This is an uncharacterized protein from Saccharomyces cerevisiae (strain ATCC 204508 / S288c) (Baker's yeast).